The sequence spans 166 residues: PTS system glucose-specific EIIA component (166 aa).

In terms of domain architecture, PTS EIIA type-1 spans 34-138 (DPVFAQKMMG…SVISPIIITN (105 aa)). Zn(2+) is bound by residues His-71 and His-86. His-86 acts as the Tele-phosphohistidine intermediate; for EIIA activity in catalysis. Phosphohistidine; by HPr is present on His-86.

In terms of assembly, heterodimer with glycerol kinase (glpk). Zn(2+) serves as cofactor.

It is found in the cytoplasm. Its function is as follows. The phosphoenolpyruvate-dependent sugar phosphotransferase system (sugar PTS), a major carbohydrate active transport system, catalyzes the phosphorylation of incoming sugar substrates concomitantly with their translocation across the cell membrane. The enzyme II complex composed of PtsG and Crr is involved in glucose transport. This chain is PTS system glucose-specific EIIA component (crr), found in Staphylococcus aureus (strain MRSA252).